The sequence spans 253 residues: Ubiquinone biosynthesis O-methyltransferase (253 aa).

S-adenosyl-L-methionine is bound by residues Arg-45, Gly-76, Asp-97, and Met-140.

This sequence belongs to the methyltransferase superfamily. UbiG/COQ3 family.

It catalyses the reaction a 3-demethylubiquinol + S-adenosyl-L-methionine = a ubiquinol + S-adenosyl-L-homocysteine + H(+). The catalysed reaction is a 3-(all-trans-polyprenyl)benzene-1,2-diol + S-adenosyl-L-methionine = a 2-methoxy-6-(all-trans-polyprenyl)phenol + S-adenosyl-L-homocysteine + H(+). It functions in the pathway cofactor biosynthesis; ubiquinone biosynthesis. O-methyltransferase that catalyzes the 2 O-methylation steps in the ubiquinone biosynthetic pathway. The protein is Ubiquinone biosynthesis O-methyltransferase of Parvibaculum lavamentivorans (strain DS-1 / DSM 13023 / NCIMB 13966).